We begin with the raw amino-acid sequence, 156 residues long: uncharacterized protein (156 aa).

The N-terminal stretch at 1–27 (MKLLVLRLILIISTIFVLLNLSCMVNG) is a signal peptide. Residues asparagine 20, asparagine 83, asparagine 103, asparagine 106, and asparagine 134 are each glycosylated (N-linked (GlcNAc...) asparagine).

Its subcellular location is the secreted. This is an uncharacterized protein from Dictyostelium discoideum (Social amoeba).